Reading from the N-terminus, the 305-residue chain is Major pollen allergen Pha a 5.2 (305 aa).

An N-terminal signal peptide occupies residues 1-25 (MAVQKYTVALFLAVALVAGPAALYA). The segment covering 65–85 (GLNEEKNAARQTDDEQKRSDE) has biased composition (basic and acidic residues). 2 disordered regions span residues 65–87 (GLNE…DEIN) and 279–299 (STAT…PAAV).

It belongs to the Poa p IX/Phl p VI allergen family.

The polypeptide is Major pollen allergen Pha a 5.2 (Phalaris aquatica (Canary grass)).